A 474-amino-acid polypeptide reads, in one-letter code: Amidophosphoribosyltransferase (474 aa).

Residues 1-10 constitute a propeptide that is removed on maturation; the sequence is MLGESEVRDK. Cys11 acts as the Nucleophile in catalysis. One can recognise a Glutamine amidotransferase type-2 domain in the interval 11 to 234; it reads CGIVGIYSQD…PGEILHLNRG (224 aa). Cys250 contributes to the [4Fe-4S] cluster binding site. Mg(2+)-binding residues include Ser297, Asp359, and Asp360. Positions 396, 447, and 450 each coordinate [4Fe-4S] cluster.

It in the C-terminal section; belongs to the purine/pyrimidine phosphoribosyltransferase family. Mg(2+) is required as a cofactor. Requires [4Fe-4S] cluster as cofactor.

It catalyses the reaction 5-phospho-beta-D-ribosylamine + L-glutamate + diphosphate = 5-phospho-alpha-D-ribose 1-diphosphate + L-glutamine + H2O. It functions in the pathway purine metabolism; IMP biosynthesis via de novo pathway; N(1)-(5-phospho-D-ribosyl)glycinamide from 5-phospho-alpha-D-ribose 1-diphosphate: step 1/2. Its function is as follows. Catalyzes the formation of phosphoribosylamine from phosphoribosylpyrophosphate (PRPP) and glutamine. The polypeptide is Amidophosphoribosyltransferase (Methanothermobacter thermautotrophicus (strain ATCC 29096 / DSM 1053 / JCM 10044 / NBRC 100330 / Delta H) (Methanobacterium thermoautotrophicum)).